The primary structure comprises 2009 residues: MEQTVLVPPGPDSFNFFTRESLAAIERRIAEEKAKNPKPDKKDDDENGPKPNSDLEAGKNLPFIYGDIPPEMVSEPLEDLDPYYINKKTFIVLNKGKAIFRFSATSALYILTPFNPLRKIAIKILVHSLFSMLIMCTILTNCVFMTMSNPPDWTKNVEYTFTGIYTFESLIKIIARGFCLEDFTFLRDPWNWLDFTVITFAYVTEFVDLGNVSALRTFRVLRALKTISVIPGLKTIVGALIQSVKKLSDVMILTVFCLSVFALIGLQLFMGNLRNKCVQWPPTNASLEEHSIEKNITMDYNGTLVNETVFEFDWKSYIQDSRYHYFLEGVLDALLCGNSSDAGQCPEGYMCVKAGRNPNYGYTSFDTFSWAFLSLFRLMTQDFWENLYQLTLRAAGKTYMIFFVLVIFLGSFYLINLILAVVAMAYEEQNQATLEEAEQKEAEFQQMLEQLKKQQEAAQQAAATTASEHSREPSAAGRLSDSSSEASKLSSKSAKERRNRRKKRKQKEQSGGEEKDDDEFHKSESEDSIRRKGFRFSIEGNRLTYEKRYSSPHQSLLSIRGSLFSPRRNSRTSLFSFRGRAKDVGSENDFADDEHSTFEDNESRRDSLFVPRRHGERRNSNLSQTSRSSRMLAVFPANGKMHSTVDCNGVVSLVGGPSVPTSPVGQLLPEVIIDKPATDDNGTTTETEMRKRRSSSFHVSMDFLEDPSQRQRAMSIASILTNTVEELEESRQKCPPCWYKFSNIFLIWDCSPYWLKVKHIVNLVVMDPFVDLAITICIVLNTLFMAMEHYPMTEHFNHVLTVGNLVFTGIFTAEMFLKIIAMDPYYYFQEGWNIFDGFIVTLSLVELGLANVEGLSVLRSFRLLRVFKLAKSWPTLNMLIKIIGNSVGALGNLTLVLAIIVFIFAVVGMQLFGKSYKDCVCKIATDCKLPRWHMNDFFHSFLIVFRVLCGEWIETMWDCMEVAGQAMCLTVFMMVMVIGNLVVLNLFLALLLSSFSADNLAATDDDNEMNNLQIAVDRMHKGIAYVKRKIYEFIQQSFVKKQKILDEIKPLDDLNNRKDNCISNHTTEIGKDLDCLKDVNGTTSGIGTGSSVEKYIIDESDYMSFINNPSLTVTVPIAVGESDFENLNTEDFSSESDLEESKEKLNESSSSSEGSTVDIGAPAEEQPVIEPEETLEPEACFTEGCVQRFKCCQISVEEGRGKQWWNLRRTCFRIVEHNWFETFIVFMILLSSGALAFEDIYIDQRKTIKTMLEYADKVFTYIFILEMLLKWVAYGYQTYFTNAWCWLDFLIVDVSLVSLTANALGYSELGAIKSLRTLRALRPLRALSRFEGMRVVVNALLGAIPSIMNVLLVCLIFWLIFSIMGVNLFAGKFYHCVNTTTGDIFEISEVNNHSDCLKLIERNETARWKNVKVNFDNVGFGYLSLLQVATFKGWMDIMYAAVDSRNVELQPKYEESLYMYLYFVIFIIFGSFFTLNLFIGVIIDNFNQQKKKFGGQDIFMTEEQKKYYNAMKKLGSKKPQKPIPRPGNKFQGMVFDFVTRQVFDISIMILICLNMVTMMVETDDQSDYVTSILSRINLVFIVLFTGECVLKLISLRHYYFTIGWNIFDFVVVILSIVGMFLAELIEKYFVSPTLFRVIRLARIGRILRLIKGAKGIRTLLFALMMSLPALFNIGLLLFLVMFIYAIFGMSNFAYVKREVGIDDMFNFETFGNSMICLFQITTSAGWDGLLAPILNSKPPDCDPNKVNPGSSVKGDCGNPSVGIFFFVSYIIISFLVVVNMYIAVILENFSVATEESAEPLSEDDFEMFYEVWEKFDPDATQFMEFEKLSQFAAALEPPLNLPQPNKLQLIAMDLPMVSGDRIHCLDILFAFTKRVLGESGEMDALRIQMEERFMASNPSKVSYQPITTTLKRKQEEVSAVIIQRAYRRHLLKRTVKQASFTYNKNKLKGGANLLVKEDMLIDRINENSITEKTDLTMSTAACPPSYDRVTKPIVEKHEQEGKDEKAKGK.

Residues 1–128 (MEQTVLVPPG…KIAIKILVHS (128 aa)) lie on the Cytoplasmic side of the membrane. Over residues 28–48 (RIAEEKAKNPKPDKKDDDENG) the composition is skewed to basic and acidic residues. Positions 28-60 (RIAEEKAKNPKPDKKDDDENGPKPNSDLEAGKN) are disordered. One copy of the I repeat lies at 110–454 (ILTPFNPLRK…QQMLEQLKKQ (345 aa)). Residues 129 to 146 (LFSMLIMCTILTNCVFMT) traverse the membrane as a helical segment. The Extracellular portion of the chain corresponds to 147-152 (MSNPPD). Residues 153–177 (WTKNVEYTFTGIYTFESLIKIIARG) form a helical membrane-spanning segment. At 178–188 (FCLEDFTFLRD) the chain is on the cytoplasmic side. A helical membrane pass occupies residues 189–205 (PWNWLDFTVITFAYVTE). The Extracellular segment spans residues 206–213 (FVDLGNVS). The helical transmembrane segment at 214–235 (ALRTFRVLRALKTISVIPGLKT) threads the bilayer. Topologically, residues 236–245 (IVGALIQSVK) are cytoplasmic. The chain crosses the membrane as a helical span at residues 246 to 269 (KLSDVMILTVFCLSVFALIGLQLF). The Extracellular portion of the chain corresponds to 270-369 (MGNLRNKCVQ…YGYTSFDTFS (100 aa)). 2 disulfides stabilise this stretch: cysteine 277-cysteine 345 and cysteine 336-cysteine 351. Residues asparagine 295, asparagine 301, asparagine 306, and asparagine 338 are each glycosylated (N-linked (GlcNAc...) asparagine). The segment at residues 370–384 (WAFLSLFRLMTQDFW) is an intramembrane region (pore-forming). Over 385–397 (ENLYQLTLRAAGK) the chain is Extracellular. Residues 398 to 423 (TYMIFFVLVIFLGSFYLINLILAVVA) traverse the membrane as a helical segment. The Cytoplasmic segment spans residues 424-768 (MAYEEQNQAT…HIVNLVVMDP (345 aa)). Positions 455 to 528 (QEAAQQAAAT…EFHKSESEDS (74 aa)) are disordered. Residues 456–466 (EAAQQAAATTA) show a composition bias toward low complexity. Serine 470 bears the Phosphoserine mark. The segment covering 479 to 492 (LSDSSSEASKLSSK) has biased composition (low complexity). Over residues 495 to 506 (KERRNRRKKRKQ) the composition is skewed to basic residues. The span at 507-528 (KEQSGGEEKDDDEFHKSESEDS) shows a compositional bias: basic and acidic residues. 6 positions are modified to phosphoserine: serine 523, serine 525, serine 550, serine 551, serine 607, and serine 730. The segment at 584–627 (VGSENDFADDEHSTFEDNESRRDSLFVPRRHGERRNSNLSQTSR) is disordered. The segment covering 593-607 (DEHSTFEDNESRRDS) has biased composition (basic and acidic residues). Residues 750–1022 (CSPYWLKVKH…QIAVDRMHKG (273 aa)) form an II repeat. Residues 769-787 (FVDLAITICIVLNTLFMAM) form a helical membrane-spanning segment. The Extracellular portion of the chain corresponds to 788–797 (EHYPMTEHFN). Residues 798–820 (HVLTVGNLVFTGIFTAEMFLKII) form a helical membrane-spanning segment. Residues 821–830 (AMDPYYYFQE) are Cytoplasmic-facing. Residues 831–849 (GWNIFDGFIVTLSLVELGL) traverse the membrane as a helical segment. Over 850–854 (ANVEG) the chain is Extracellular. Residues 855–874 (LSVLRSFRLLRVFKLAKSWP) traverse the membrane as a helical segment. Residues 875–891 (TLNMLIKIIGNSVGALG) are Cytoplasmic-facing. Residues 892-912 (NLTLVLAIIVFIFAVVGMQLF) traverse the membrane as a helical segment. Topologically, residues 913–938 (GKSYKDCVCKIATDCKLPRWHMNDFF) are extracellular. Cysteine 921 and cysteine 927 are oxidised to a cystine. An intramembrane region (pore-forming) is located at residues 939–952 (HSFLIVFRVLCGEW). Over 953-965 (IETMWDCMEVAGQ) the chain is Extracellular. A disulfide bridge links cysteine 959 with cysteine 968. The helical transmembrane segment at 966 to 992 (AMCLTVFMMVMVIGNLVVLNLFLALLL) threads the bilayer. Over 993–1218 (SSFSADNLAA…RTCFRIVEHN (226 aa)) the chain is Cytoplasmic. The tract at residues 1129-1163 (TEDFSSESDLEESKEKLNESSSSSEGSTVDIGAPA) is disordered. The III repeat unit spans residues 1200–1514 (RGKQWWNLRR…KKYYNAMKKL (315 aa)). Residues 1219-1237 (WFETFIVFMILLSSGALAF) traverse the membrane as a helical segment. The Extracellular segment spans residues 1238–1250 (EDIYIDQRKTIKT). Residues 1251 to 1276 (MLEYADKVFTYIFILEMLLKWVAYGY) form a helical membrane-spanning segment. Residues 1277 to 1278 (QT) lie on the Cytoplasmic side of the membrane. Residues 1279–1304 (YFTNAWCWLDFLIVDVSLVSLTANAL) form a helical membrane-spanning segment. The Extracellular segment spans residues 1305 to 1313 (GYSELGAIK). A helical membrane pass occupies residues 1314–1332 (SLRTLRALRPLRALSRFEG). The Cytoplasmic segment spans residues 1333 to 1345 (MRVVVNALLGAIP). The chain crosses the membrane as a helical span at residues 1346-1369 (SIMNVLLVCLIFWLIFSIMGVNLF). The Extracellular portion of the chain corresponds to 1370–1415 (AGKFYHCVNTTTGDIFEISEVNNHSDCLKLIERNETARWKNVKVNF). Cysteine 1376 and cysteine 1396 are oxidised to a cystine. Positions 1416–1433 (DNVGFGYLSLLQVATFKG) form an intramembrane region, pore-forming. At 1434–1457 (WMDIMYAAVDSRNVELQPKYEESL) the chain is on the extracellular side. A helical membrane pass occupies residues 1458-1483 (YMYLYFVIFIIFGSFFTLNLFIGVII). At 1484-1541 (DNFNQQKKKFGGQDIFMTEEQKKYYNAMKKLGSKKPQKPIPRPGNKFQGMVFDFVTRQ) the chain is on the cytoplasmic side. The residue at position 1516 (serine 1516) is a Phosphoserine; by PKC. An IV repeat occupies 1523–1821 (IPRPGNKFQG…WEKFDPDATQ (299 aa)). A helical transmembrane segment spans residues 1542 to 1560 (VFDISIMILICLNMVTMMV). Over 1561–1571 (ETDDQSDYVTS) the chain is Extracellular. The S1-S2 loop of repeat IV stretch occupies residues 1561 to 1571 (ETDDQSDYVTS). The helical transmembrane segment at 1572 to 1593 (ILSRINLVFIVLFTGECVLKLI) threads the bilayer. At 1594–1601 (SLRHYYFT) the chain is on the cytoplasmic side. Residues 1602 to 1623 (IGWNIFDFVVVILSIVGMFLAE) traverse the membrane as a helical segment. The interval 1619–1636 (MFLAELIEKYFVSPTLFR) is S3b-S4 loop of repeat IV. Residues 1624 to 1636 (LIEKYFVSPTLFR) lie on the Extracellular side of the membrane. The helical transmembrane segment at 1637-1655 (VIRLARIGRILRLIKGAKG) threads the bilayer. Topologically, residues 1656–1665 (IRTLLFALMM) are cytoplasmic. A helical transmembrane segment spans residues 1666-1688 (SLPALFNIGLLLFLVMFIYAIFG). Residues 1689 to 1711 (MSNFAYVKREVGIDDMFNFETFG) are Extracellular-facing. The pore-forming intramembrane region spans 1712-1726 (NSMICLFQITTSAGW). Over 1727-1759 (DGLLAPILNSKPPDCDPNKVNPGSSVKGDCGNP) the chain is Extracellular. Cysteine 1741 and cysteine 1756 are disulfide-bonded. Residues 1760–1788 (SVGIFFFVSYIIISFLVVVNMYIAVILEN) traverse the membrane as a helical segment. The Cytoplasmic portion of the chain corresponds to 1789-2009 (FSVATEESAE…EGKDEKAKGK (221 aa)). In terms of domain architecture, IQ spans 1915–1944 (EEVSAVIIQRAYRRHLLKRTVKQASFTYNK). The interval 1984 to 2009 (PSYDRVTKPIVEKHEQEGKDEKAKGK) is disordered. Over residues 1988–2009 (RVTKPIVEKHEQEGKDEKAKGK) the composition is skewed to basic and acidic residues.

The protein belongs to the sodium channel (TC 1.A.1.10) family. Nav1.1/SCN1A subfamily. In terms of assembly, the Nav1.1 voltage-gated sodium channel consists of an ion-conducting alpha subunit SCN1A which is functional on its own regulated by one or more beta-1 (SCN1B), beta-2 (SCN2B), beta-3 (SCN3B) and beta-4 (SCN4B) subunits. SCN1B and SCN3B are non-covalently associated with SCN1A. SCN2B and SCN4B are disulfide-linked to SCN1A. SCN1B regulates both the expression at the plasma membrane and the voltage dependence of Nav1.1 inactivation. SCN3B and SCN4B reduce Nav1.1 conductance. Probably interacts with TMEM233; modulates the gating properties of NaV1.1. Interacts with FGF13; regulates the steady-state inactivation of Nav.1.1. Phosphorylation at Ser-1516 by PKC in a highly conserved cytoplasmic loop slows inactivation of the sodium channel and reduces peak sodium currents. Present in cerebellar Purkinje neurons (at protein level). Expressed by myelinated, non-C-fiber neurons in sensory ganglia.

Its subcellular location is the cell membrane. The enzyme catalyses Na(+)(in) = Na(+)(out). Its activity is regulated as follows. Activated by the spider toxins Hm1a and Hm1b (H.maculata, AC P60992 and AC P0DOC5) eliciting acute pain and mechanical allodynia. In terms of biological role, pore-forming subunit of Nav1.1, a voltage-gated sodium (Nav) channel that directly mediates the depolarizing phase of action potentials in excitable membranes. Navs, also called VGSCs (voltage-gated sodium channels) or VDSCs (voltage-dependent sodium channels), operate by switching between closed and open conformations depending on the voltage difference across the membrane. In the open conformation they allow Na(+) ions to selectively pass through the pore, along their electrochemical gradient. The influx of Na(+) ions provokes membrane depolarization, initiating the propagation of electrical signals throughout cells and tissues. By regulating the excitability of neurons, ensures that they respond appropriately to synaptic inputs, maintaining the balance between excitation and inhibition in brain neural circuits. Nav1.1 plays a role in controlling the excitability and action potential propagation from somatosensory neurons, thereby contributing to the sensory perception of mechanically-induced pain. The chain is Sodium channel protein type 1 subunit alpha from Mus musculus (Mouse).